Reading from the N-terminus, the 102-residue chain is NADH-quinone oxidoreductase subunit K 2 (102 aa).

3 helical membrane-spanning segments follow: residues 6–26 (LEAF…GIIA), 30–50 (LVTV…ALVG), and 66–86 (FIIA…IAIF).

It belongs to the complex I subunit 4L family. As to quaternary structure, NDH-1 is composed of 14 different subunits. Subunits NuoA, H, J, K, L, M, N constitute the membrane sector of the complex.

It is found in the cell inner membrane. It catalyses the reaction a quinone + NADH + 5 H(+)(in) = a quinol + NAD(+) + 4 H(+)(out). Its function is as follows. NDH-1 shuttles electrons from NADH, via FMN and iron-sulfur (Fe-S) centers, to quinones in the respiratory chain. The immediate electron acceptor for the enzyme in this species is believed to be ubiquinone. Couples the redox reaction to proton translocation (for every two electrons transferred, four hydrogen ions are translocated across the cytoplasmic membrane), and thus conserves the redox energy in a proton gradient. This chain is NADH-quinone oxidoreductase subunit K 2, found in Aquifex aeolicus (strain VF5).